The sequence spans 240 residues: Histidinol dehydrogenase homolog oryD (240 aa).

Gln64 and His67 together coordinate Zn(2+). Catalysis depends on Glu134, which acts as the Proton acceptor. Positions 168 and 228 each coordinate Zn(2+).

It belongs to the histidinol dehydrogenase family. It depends on Zn(2+) as a cofactor.

Its pathway is secondary metabolite biosynthesis. In terms of biological role, histidinol dehydrogenase homolog; part of the gene cluster that mediates the biosynthesis of oryzines, natural products with an unusual maleidride backbone. The two subunits of the fungal fatty acid synthase oryfasA and oryfasB probably form octenoic acid. This fatty acid is most likely activated by the acyl-CoA ligase oryP to give octenyl-CoA before the citrate synthase-like protein oryE catalyzes condensation with oxaloacetate to form tricarboxylic acid. The next steps of the pathways are conjectural, but a favorite possible route has been proposed, beginning with decarboxylation and concomitant dehydration by the decarboxylase oryM, followed by tautomerization, which may lead to the production of a diene intermediate. Reduction of this diene intermediate could give the known metabolite piliformic acid. On the pathway to oryzine B and oryzine A, however, hydroxylation of the diene by the alpha-ketoglutarate-dependent dioxygenase oryG and lactonisation by the lactonohydrolases oryH or oryL could give oryzine B directly. Finally, enoyl reduction by the dehydrogenase oryD would then convert oryzine B into oryzine A. The protein is Histidinol dehydrogenase homolog oryD of Aspergillus oryzae (strain ATCC 42149 / RIB 40) (Yellow koji mold).